The sequence spans 89 residues: Small ribosomal subunit protein uS15 (89 aa).

This sequence belongs to the universal ribosomal protein uS15 family. As to quaternary structure, part of the 30S ribosomal subunit. Forms a bridge to the 50S subunit in the 70S ribosome, contacting the 23S rRNA.

In terms of biological role, one of the primary rRNA binding proteins, it binds directly to 16S rRNA where it helps nucleate assembly of the platform of the 30S subunit by binding and bridging several RNA helices of the 16S rRNA. Functionally, forms an intersubunit bridge (bridge B4) with the 23S rRNA of the 50S subunit in the ribosome. The chain is Small ribosomal subunit protein uS15 from Bacteroides thetaiotaomicron (strain ATCC 29148 / DSM 2079 / JCM 5827 / CCUG 10774 / NCTC 10582 / VPI-5482 / E50).